The sequence spans 217 residues: MLO-like protein (217 aa).

3 helical membrane passes run 35–55 (FKVV…FLLS), 59–79 (GWVA…VVGT), and 119–139 (LVLF…AFFI).

This sequence belongs to the MLO family.

The protein localises to the membrane. Its function is as follows. May be involved in modulation of pathogen defense and leaf cell death. The polypeptide is MLO-like protein (Linum usitatissimum (Flax)).